The primary structure comprises 291 residues: 4-hydroxy-tetrahydrodipicolinate synthase (291 aa).

Thr47 contributes to the pyruvate binding site. The Proton donor/acceptor role is filled by Tyr134. Lys162 serves as the catalytic Schiff-base intermediate with substrate. Ile205 provides a ligand contact to pyruvate.

It belongs to the DapA family. As to quaternary structure, homotetramer; dimer of dimers.

It is found in the cytoplasm. The enzyme catalyses L-aspartate 4-semialdehyde + pyruvate = (2S,4S)-4-hydroxy-2,3,4,5-tetrahydrodipicolinate + H2O + H(+). It participates in amino-acid biosynthesis; L-lysine biosynthesis via DAP pathway; (S)-tetrahydrodipicolinate from L-aspartate: step 3/4. Its function is as follows. Catalyzes the condensation of (S)-aspartate-beta-semialdehyde [(S)-ASA] and pyruvate to 4-hydroxy-tetrahydrodipicolinate (HTPA). The protein is 4-hydroxy-tetrahydrodipicolinate synthase of Methanosphaerula palustris (strain ATCC BAA-1556 / DSM 19958 / E1-9c).